Consider the following 651-residue polypeptide: MKRKVKKMAAMATSIIMAIMIILHSIPVLAGRIIYDNETGTHGGYDYELWKDYGNTIMELNDGGTFSCQWSNIGNALFRKGRKFNSDKTYQELGDIVVEYGCDYNPNGNSYLCVYGWTRNPLVEYYIVESWGSWRPPGATPKGTITVDGGTYEIYETTRVNQPSIDGTATFQQYWSVRTSKRTSGTISVTEHFKQWERMGMRMGKMYEVALTVEGYQSSGYANVYKNEIRIGANPTPAPSQSPIRRDAFSIIEAEEYNSTNSSTLQVIGTPNNGRGIGYIENGNTVTYSNIDFGSGATGFSATVATEVNTSIQIRSDSPTGTLLGTLYVSSTGSWNTYQTVSTNISKITGVHDIVLVFSGPVNVDNFIFSRSSPVPAPGDNTRDAYSIIQAEDYDSSYGPNLQIFSLPGGGSAIGYIENGYSTTYNNVNFANGLSSITARVATQISTSIQVRAGGATGTLLGTIYVPSTNSWDSYQNVTANLSNITGVHDITLVFSGPVNVDYFVFTPANVNSGPTSPVGGTRSAFSNIQAEDYDSSYGPNLQIFSLPGGGSAIGYIENGYSTTYKNIDFGDGATSVTARVATQNATTIQVRLGSPSGTLLGTIYVGSTGSFDTYRDVSATISNTAGVKDIVLVFSGPVNVDWFVFSKSGT.

A signal peptide spans 1–30 (MKRKVKKMAAMATSIIMAIMIILHSIPVLA). The 195-residue stretch at 33-227 (IIYDNETGTH…SSGYANVYKN (195 aa)) folds into the GH11 domain. Glu-124 functions as the Nucleophile in the catalytic mechanism. Glu-214 functions as the Proton donor in the catalytic mechanism. CBM6 domains are found at residues 250 to 370 (SIIE…FIFS), 387 to 507 (SIIQ…FVFT), and 527 to 647 (SNIQ…FVFS). Residues Glu-253 and Glu-255 each coordinate Ca(2+). Thr-270 is a binding site for D-xylotriose. A Ca(2+)-binding site is contributed by Arg-275. Repeat unit 1 spans residues 278–339 (GYIENGNTVT…SSTGSWNTYQ (62 aa)). The segment at 278–616 (GYIENGNTVT…GSTGSFDTYR (339 aa)) is 3 X 61 AA approximate repeats. D-xylotriose is bound by residues Tyr-279, Asn-336, and Asn-363. D-xylobiose-binding residues include Tyr-279, Asn-336, and Asn-363. Position 365 (Asp-365) interacts with Ca(2+). Copy 2 of the repeat occupies 415 to 476 (GYIENGYSTT…PSTNSWDSYQ (62 aa)). Ca(2+)-binding residues include Gln-530, Glu-532, and Ser-552. Repeat unit 3 spans residues 555 to 616 (GYIENGYSTT…GSTGSFDTYR (62 aa)). Residues Tyr-556, Asp-613, and Asn-640 each coordinate D-xylotriose. Residue Asp-642 coordinates Ca(2+).

This sequence belongs to the glycosyl hydrolase 11 (cellulase G) family.

The protein localises to the secreted. It catalyses the reaction Endohydrolysis of (1-&gt;4)-beta-D-xylosidic linkages in xylans.. It participates in glycan degradation; xylan degradation. Endoxylanase that degrades arabinoxylan and glucuronoxylan to xylobiose and xylotriose (in vitro). The protein is Endo-1,4-beta-xylanase A (xynA) of Thermoclostridium stercorarium (Clostridium stercorarium).